The following is an 83-amino-acid chain: Short neurotoxin 1 (83 aa).

The first 21 residues, 1–21 (MKTLLLTLVVVTIVCLDLGYT), serve as a signal peptide directing secretion. 4 cysteine pairs are disulfide-bonded: C24–C45, C38–C62, C64–C75, and C76–C81.

This sequence belongs to the three-finger toxin family. Short-chain subfamily. Type I alpha-neurotoxin sub-subfamily. Expressed by the venom gland.

The protein resides in the secreted. Functionally, binds to muscle nicotinic acetylcholine receptor (nAChR) and inhibit acetylcholine from binding to the receptor, thereby impairing neuromuscular transmission. In Oxyuranus scutellatus scutellatus (Australian taipan), this protein is Short neurotoxin 1.